A 226-amino-acid chain; its full sequence is MNDYPGSGLHARTQAEYTGARAESRYVIPRFVERTSQGVREYDPYAKLFEERVIFLGVQIDDASANDVMAQLLCLESMDPDRDISVYINSPGGSFTALTAIYDTMQFVKPDIQTVCMGQAASAAAILLAAGTPGKRMALPNARVLIHQPYSETGRGQVSDLEIAANEILRMRSQLEDMLAKHSTTPIEKIREDIERDKILTAEDALAYGLIDQIISTRKMNNSAVA.

The active-site Nucleophile is Ser122. His147 is an active-site residue.

Belongs to the peptidase S14 family. In terms of assembly, fourteen ClpP subunits assemble into 2 heptameric rings which stack back to back to give a disk-like structure with a central cavity, resembling the structure of eukaryotic proteasomes.

It is found in the cytoplasm. It carries out the reaction Hydrolysis of proteins to small peptides in the presence of ATP and magnesium. alpha-casein is the usual test substrate. In the absence of ATP, only oligopeptides shorter than five residues are hydrolyzed (such as succinyl-Leu-Tyr-|-NHMec, and Leu-Tyr-Leu-|-Tyr-Trp, in which cleavage of the -Tyr-|-Leu- and -Tyr-|-Trp bonds also occurs).. Its function is as follows. Cleaves peptides in various proteins in a process that requires ATP hydrolysis. Has a chymotrypsin-like activity. Plays a major role in the degradation of misfolded proteins. The chain is ATP-dependent Clp protease proteolytic subunit 4 from Streptomyces avermitilis (strain ATCC 31267 / DSM 46492 / JCM 5070 / NBRC 14893 / NCIMB 12804 / NRRL 8165 / MA-4680).